A 328-amino-acid polypeptide reads, in one-letter code: tRNA(Ile)-lysidine synthase (328 aa).

Residue 35–40 (SGGADS) coordinates ATP.

The protein belongs to the tRNA(Ile)-lysidine synthase family.

It localises to the cytoplasm. The enzyme catalyses cytidine(34) in tRNA(Ile2) + L-lysine + ATP = lysidine(34) in tRNA(Ile2) + AMP + diphosphate + H(+). Functionally, ligates lysine onto the cytidine present at position 34 of the AUA codon-specific tRNA(Ile) that contains the anticodon CAU, in an ATP-dependent manner. Cytidine is converted to lysidine, thus changing the amino acid specificity of the tRNA from methionine to isoleucine. The sequence is that of tRNA(Ile)-lysidine synthase from Polaromonas naphthalenivorans (strain CJ2).